A 453-amino-acid chain; its full sequence is Sodium/alanine symporter AgcS (453 aa).

The Extracellular portion of the chain corresponds to 1–17; that stretch reads MDFVSLVNTVNSFVWGP. The chain crosses the membrane as a helical span at residues 18 to 32; the sequence is YMLVLLLGTGIFLTL. Topologically, residues 33–67 are cytoplasmic; that stretch reads RLGFMQIHTLPYALKLAFSKHQDETSEGDISHFQA. A helical transmembrane segment spans residues 68–89; that stretch reads LMTALAATIGTGNIAGVATAYV. Residue threonine 75 coordinates D-alanine. Positions 75 and 79 each coordinate L-alanine. Asparagine 80 lines the D-alanine pocket. Over 90–92 the chain is Extracellular; that stretch reads LGG. Residues 93-111 form a helical membrane-spanning segment; sequence PGAIFWMWVTAFFGMATKY. Residues 112-148 are Cytoplasmic-facing; sequence AEAVLAIKYRTVDDNGEMAGGPMYFLEKGLPDHGLGK. Residues 149–179 form a helical membrane-spanning segment; sequence ILGVAFAFFGAFAAFGIGNMVQTNSVADAVA. Glutamine 170 is a D-alanine binding site. Glutamine 170 lines the L-alanine pocket. Residues 180-186 lie on the Extracellular side of the membrane; it reads SNFGVDP. Residues 187 to 202 form a helical membrane-spanning segment; the sequence is LITGFVLAIFTAAVIL. The Cytoplasmic portion of the chain corresponds to 203–206; the sequence is GGIK. A helical transmembrane segment spans residues 207 to 233; that stretch reads SIGKATGIIVPFMAVFYILAGLVILAM. Residues 234–258 are Extracellular-facing; it reads NIGYIIPAFGTIFSSAFNFSAGFGA. Residues 259–274 traverse the membrane as a helical segment; it reads LIGTAIMWGVKRGVFS. A D-alanine-binding site is contributed by 273–274; that stretch reads FS. 273-276 is a binding site for L-alanine; sequence FSNE. Residues 275–300 are Cytoplasmic-facing; the sequence is NEAGLGSAPIAAAAAKTDHPGRQALV. A helical membrane pass occupies residues 301 to 322; that stretch reads SMTGTFLDTIVVCTITGLVLTI. The Extracellular segment spans residues 323–350; that stretch reads AGLKAFPGLTDLTGASLTAASFDALMPM. The chain crosses the membrane as a helical span at residues 351–378; it reads GGLIVTIGLVFFAYSTVLGWSYYGEKCF. Residues 379–386 are Cytoplasmic-facing; it reads EYLIGTKG. A helical transmembrane segment spans residues 387 to 403; sequence IRLYRIAFVLVAFWGAT. Over 404 to 408 the chain is Extracellular; sequence ASLPL. The helical transmembrane segment at 409–430 threads the bilayer; the sequence is VWNIADTLNGAMAIPNLIGLLL. At 431-453 the chain is on the cytoplasmic side; that stretch reads LSGVVVSETKAFNEIRKNEAKNA.

Belongs to the alanine or glycine:cation symporter (AGCS) (TC 2.A.25) family.

It localises to the cell membrane. The enzyme catalyses D-alanine(in) + Na(+)(in) = D-alanine(out) + Na(+)(out). The catalysed reaction is L-alanine(in) + Na(+)(in) = L-alanine(out) + Na(+)(out). It catalyses the reaction glycine(in) + Na(+)(in) = glycine(out) + Na(+)(out). In terms of biological role, catalyzes the sodium-dependent uptake of extracellular D-alanine and L-alanine. Can also transport glycine. Binds glycine and both enantiomers of alanine, while strictly excluding other amino acids. The polypeptide is Sodium/alanine symporter AgcS (Methanococcus maripaludis (strain DSM 14266 / JCM 13030 / NBRC 101832 / S2 / LL)).